The chain runs to 498 residues: Tyrosine 3-monooxygenase (498 aa).

The segment covering 1–10 (MPTPSASSPQ) has biased composition (polar residues). The tract at residues 1–33 (MPTPSASSPQPKGFRRAVSEQDTKQAEAVTSPR) is disordered. Phosphoserine is present on residues serine 19 and serine 31. At serine 40 the chain carries Phosphoserine; by CaMK2 and PKA. Positions 331, 336, and 376 each coordinate Fe cation. The residue at position 472 (serine 472) is a Phosphoserine.

This sequence belongs to the biopterin-dependent aromatic amino acid hydroxylase family. In terms of assembly, homotetramer. Interacts (when phosphorylated at Ser-19) with YWHAG; one YWHAG dimer bounds to one TH tetramer and this interaction may influence the phosphorylation and dephosphorylation of other sites. Interacts with NT5DC2; the interaction results in reduced phosphorylation and decreased catalytic activity of TH. Fe(2+) is required as a cofactor. Phosphorylated on Ser-19, Ser-31 and Ser-40 by several protein kinases with different site specificities. Phosphorylation at Ser-31 and Ser-40 leads to an increase of TH activity. Phosphorylation at Ser-40 activates the enzyme and also counteracts the feedback inhibition of TH by catecholamines. Phosphorylation of Ser-19 and Ser-31 triggers the proteasomal degradation of TH through the ubiquitin-proteasome pathway. Phosphorylation at Ser-31 facilitates transport of TH from the soma to the nerve terminals via the microtubule network. Phosphorylation at Ser-19 induces the high-affinity binding to the 14-3-3 protein YWHAG; this interaction may influence the phosphorylation and dephosphorylation of other sites. Ser-19 increases the phosphorylation at Ser-40 in a hierarchical manner, leading to increased activity. As to expression, expressed in the adrenal gland. Expressed in the retina. Expressed in the in the striatum (at protein level).

The protein localises to the cytoplasm. The protein resides in the perinuclear region. It localises to the nucleus. Its subcellular location is the cell projection. It is found in the axon. The protein localises to the cytoplasmic vesicle. The protein resides in the secretory vesicle. It localises to the synaptic vesicle. The catalysed reaction is (6R)-L-erythro-5,6,7,8-tetrahydrobiopterin + L-tyrosine + O2 = (4aS,6R)-4a-hydroxy-L-erythro-5,6,7,8-tetrahydrobiopterin + L-dopa. The protein operates within catecholamine biosynthesis; dopamine biosynthesis; dopamine from L-tyrosine: step 1/2. Its activity is regulated as follows. Inhibited in feedback fashion by the catecholamine neurotransmitters, especially by dopamine in competition with tetrahydrobiopterin. Phosphorylation of several Ser/Thr residues in the N-terminus regulates the catalytic activity. Ser-31 and Ser-40 are readily phosphorylated to activate the catalytic activity. A Cysteine modification induced by N-ethylmaleimide (NEM), inhibits tyrosine 3-monooxygenase activity through the modification of the Cys-177. Catalyzes the conversion of L-tyrosine to L-dihydroxyphenylalanine (L-Dopa), the rate-limiting step in the biosynthesis of catecholamines, dopamine, noradrenaline, and adrenaline. Uses tetrahydrobiopterin and molecular oxygen to convert tyrosine to L-Dopa. In addition to tyrosine, is able to catalyze the hydroxylation of phenylalanine and tryptophan with lower specificity. Positively regulates the regression of retinal hyaloid vessels during postnatal development. This Mus musculus (Mouse) protein is Tyrosine 3-monooxygenase (Th).